Consider the following 293-residue polypeptide: Movement protein BC1 (293 aa).

It belongs to the begomovirus movement protein BC1 family. Binds to dimeric supercoiled plasmid DNA. Phosphorylated.

It is found in the host cell membrane. The protein resides in the host microsome membrane. Its subcellular location is the host endoplasmic reticulum membrane. Functionally, transports viral genome to neighboring plant cells directly through plasmosdesmata, without any budding. The movement protein allows efficient cell to cell propagation, by bypassing the host cell wall barrier. Begomovirus genome is shuttled out of nucleus by Nuclear shuttle protein (NSP) and the movement protein transports the DNA-NSP complex to cell plasmodesmata and facilitates further movement across the cell wall. The chain is Movement protein BC1 from Macroptilium lathyroides (Lima bean).